A 396-amino-acid chain; its full sequence is Elongation factor Tu 2 (396 aa).

Residues 10–206 (KPHCNIGTIG…AVDAYIPQPE (197 aa)) enclose the tr-type G domain. The G1 stretch occupies residues 19–26 (GHVDHGKT). A GTP-binding site is contributed by 19 to 26 (GHVDHGKT). Mg(2+) is bound at residue threonine 26. Residues 60-64 (GITIS) form a G2 region. Positions 81–84 (DCPG) are G3. GTP is bound by residues 81 to 85 (DCPGH) and 136 to 139 (NKCD). Residues 136 to 139 (NKCD) form a G4 region. Positions 174 to 176 (SAL) are G5.

Belongs to the TRAFAC class translation factor GTPase superfamily. Classic translation factor GTPase family. EF-Tu/EF-1A subfamily. In terms of assembly, monomer.

It is found in the cytoplasm. The enzyme catalyses GTP + H2O = GDP + phosphate + H(+). GTP hydrolase that promotes the GTP-dependent binding of aminoacyl-tRNA to the A-site of ribosomes during protein biosynthesis. This is Elongation factor Tu 2 from Rhodopseudomonas palustris (strain BisB5).